We begin with the raw amino-acid sequence, 476 residues long: Replication factor C large subunit (476 aa).

50–57 (GPPGVGKT) provides a ligand contact to ATP. The segment at 447–476 (YEKGTKKGKGEKRRKGSDEGSGLLKWLKKD) is disordered. Basic residues predominate over residues 452-461 (KKGKGEKRRK).

It belongs to the activator 1 small subunits family. RfcL subfamily. As to quaternary structure, heteromultimer composed of small subunits (RfcS) and large subunits (RfcL).

In terms of biological role, part of the RFC clamp loader complex which loads the PCNA sliding clamp onto DNA. The sequence is that of Replication factor C large subunit from Ignicoccus hospitalis (strain KIN4/I / DSM 18386 / JCM 14125).